The following is a 312-amino-acid chain: Homoserine O-succinyltransferase (312 aa).

C142 serves as the catalytic Acyl-thioester intermediate. The substrate site is built by K163 and S192. H235 functions as the Proton acceptor in the catalytic mechanism. E237 is a catalytic residue. R249 is a substrate binding site.

This sequence belongs to the MetA family.

It localises to the cytoplasm. It catalyses the reaction L-homoserine + succinyl-CoA = O-succinyl-L-homoserine + CoA. The protein operates within amino-acid biosynthesis; L-methionine biosynthesis via de novo pathway; O-succinyl-L-homoserine from L-homoserine: step 1/1. Functionally, transfers a succinyl group from succinyl-CoA to L-homoserine, forming succinyl-L-homoserine. The sequence is that of Homoserine O-succinyltransferase from Shewanella halifaxensis (strain HAW-EB4).